Reading from the N-terminus, the 906-residue chain is Formin-like protein 18 (906 aa).

A signal peptide spans 1–25; the sequence is MSKLRWLIMAFLVCLLLLTPKDLEG. Residues 120–140 traverse the membrane as a helical segment; that stretch reads MVVVGLSAACVALVTLVGICF. Disordered regions lie at residues 267–416 and 854–906; these read AGGG…QADP and NAKA…DSDD. Over residues 274 to 292 the composition is skewed to pro residues; that stretch reads AAPPPPAGPPPPAPPPLPP. Residues 293–303 are compositionally biased toward basic residues; that stretch reads SHHHHHGHHPP. Pro residues-rich tracts occupy residues 320 to 339, 348 to 375, and 383 to 402; these read APPP…PAPS, GPPP…PPPG, and GPPP…PPFK. Composition is skewed to low complexity over residues 403–416 and 854–877; these read KSPG…QADP and NAKA…QSSF. In terms of domain architecture, FH2 spans 411–866; it reads AAQADPNKAK…AKKQQQPTPA (456 aa). Positions 878–889 are enriched in basic and acidic residues; sequence RDPRQQIQDRRA. Low complexity predominate over residues 897–906; that stretch reads SSSSSSDSDD.

The protein belongs to the formin-like family. Class-I subfamily.

It is found in the membrane. The sequence is that of Formin-like protein 18 (FH18) from Oryza sativa subsp. japonica (Rice).